The chain runs to 572 residues: Phosphoglucomutase-2 (572 aa).

Substrate-binding positions include threonine 23, arginine 27, 126-127 (SH), and lysine 140. Serine 126 functions as the Phosphoserine intermediate in the catalytic mechanism. Serine 126 is a binding site for Mg(2+). Mg(2+)-binding residues include aspartate 308, aspartate 310, and aspartate 312. Residues 312–313 (DR), threonine 373, 392–394 (EES), lysine 405, and arginine 527 each bind substrate.

This sequence belongs to the phosphohexose mutase family. Mg(2+) is required as a cofactor. Post-translationally, phosphorylated via a calcium-dependent protein kinase.

The protein localises to the cytoplasm. It catalyses the reaction alpha-D-glucose 1-phosphate = alpha-D-glucose 6-phosphate. May be involved in membrane fusion in exocytosis. The polypeptide is Phosphoglucomutase-2 (pp63-2) (Paramecium tetraurelia).